Here is a 684-residue protein sequence, read N- to C-terminus: Kelch repeat and BTB domain-containing protein 7 (684 aa).

Residues 1–27 (MQSREDVPRSRRLASPRGGRRPKRISK) form a disordered region. The segment covering 10–26 (SRRLASPRGGRRPKRIS) has biased composition (basic residues). Serine 29 carries the post-translational modification Phosphoserine. The BTB domain occupies 63–138 (CDVTIEVVTP…CYTGRVSLSE (76 aa)). 5 Kelch repeats span residues 386 to 435 (AVCV…YLNG), 436 to 484 (YIYI…VVQN), 486 to 523 (LYAV…VFND), 524 to 564 (EIYC…IVNH), and 567 to 616 (KLLL…CLCA). A disordered region spans residues 630-666 (ITEEDDARSESSTEWDLDGFSELDSESGSSSSFSDDE). Residues 631 to 654 (TEEDDARSESSTEWDLDGFSELDS) show a composition bias toward acidic residues. The short motif at 668–671 (WVQV) is the ATG8 interaction motif (AIM) element.

In terms of assembly, core component of a BCR3 (BTB-CUL3-RBX1) E3 ubiquitin ligase complex, also named Cul3-RING ubiquitin ligase complex CUL3(KBTBD6/7), composed of CUL3, RBX1, KBTBD6 and KBTBD7. Interacts with GABARAP; the interaction is direct and is required for the ubiquitination of TIAM1. Interacts with GABARAPL1, GABARAPL2 and MAP1LC3B; the interaction is direct.

Its subcellular location is the cytoplasm. It localises to the nucleus. Its pathway is protein modification; protein ubiquitination. Functionally, as part of the CUL3(KBTBD6/7) E3 ubiquitin ligase complex functions as a substrate adapter for the RAC1 guanine exchange factor (GEF) TIAM1, mediating its 'Lys-48' ubiquitination and proteasomal degradation. By controlling this ubiquitination, regulates RAC1 signal transduction and downstream biological processes including the organization of the cytoskeleton, cell migration and cell proliferation. Ubiquitination of TIAM1 requires the membrane-associated protein GABARAP which may restrict locally the activity of the complex. The chain is Kelch repeat and BTB domain-containing protein 7 from Homo sapiens (Human).